The chain runs to 291 residues: Methionine aminopeptidase (291 aa).

Histidine 118 is a binding site for substrate. 3 residues coordinate a divalent metal cation: aspartate 135, aspartate 146, and histidine 209. Histidine 216 provides a ligand contact to substrate. 2 residues coordinate a divalent metal cation: glutamate 241 and glutamate 273.

Belongs to the peptidase M24A family. Methionine aminopeptidase type 1 subfamily. Monomer. Co(2+) serves as cofactor. Zn(2+) is required as a cofactor. It depends on Mn(2+) as a cofactor. The cofactor is Fe(2+).

The catalysed reaction is Release of N-terminal amino acids, preferentially methionine, from peptides and arylamides.. In terms of biological role, removes the N-terminal methionine from nascent proteins. The N-terminal methionine is often cleaved when the second residue in the primary sequence is small and uncharged (Met-Ala-, Cys, Gly, Pro, Ser, Thr, or Val). Requires deformylation of the N(alpha)-formylated initiator methionine before it can be hydrolyzed. This chain is Methionine aminopeptidase, found in Chlamydia pneumoniae (Chlamydophila pneumoniae).